Consider the following 479-residue polypeptide: Ribosomal protein uS12 methylthiotransferase RimO (479 aa).

The interval 1–34 (MTVNTFDPSKASPVTHASDSASKTPEPNAVAAPS) is disordered. Polar residues predominate over residues 15–25 (THASDSASKTP). The MTTase N-terminal domain maps to 39–151 (NRVGFVSLGC…VMGAVHGYIP (113 aa)). 6 residues coordinate [4Fe-4S] cluster: Cys48, Cys84, Cys113, Cys184, Cys188, and Cys191. The Radical SAM core domain maps to 170 to 407 (LTPRHYAYLK…METQQAISAA (238 aa)). Residues 410-476 (KQKVGYEMDV…DYDLTGIAVE (67 aa)) enclose the TRAM domain.

This sequence belongs to the methylthiotransferase family. RimO subfamily. [4Fe-4S] cluster serves as cofactor.

The protein localises to the cytoplasm. It carries out the reaction L-aspartate(89)-[ribosomal protein uS12]-hydrogen + (sulfur carrier)-SH + AH2 + 2 S-adenosyl-L-methionine = 3-methylsulfanyl-L-aspartate(89)-[ribosomal protein uS12]-hydrogen + (sulfur carrier)-H + 5'-deoxyadenosine + L-methionine + A + S-adenosyl-L-homocysteine + 2 H(+). Catalyzes the methylthiolation of an aspartic acid residue of ribosomal protein uS12. This is Ribosomal protein uS12 methylthiotransferase RimO from Saccharophagus degradans (strain 2-40 / ATCC 43961 / DSM 17024).